The following is a 209-amino-acid chain: ADP-ribose pyrophosphatase (209 aa).

Substrate is bound by residues 28–29 (FF), 51–52 (RE), arginine 56, and arginine 79. The Nudix hydrolase domain occupies 55 to 193 (ERGHAAVLLP…KIDNAASVIA (139 aa)). Alanine 96 is a binding site for Mg(2+). A Nudix box motif is present at residues 97 to 118 (GMIEEGESVEDVARREAIEEAG). Methionine 98 is a substrate binding site. 2 residues coordinate Mg(2+): glutamate 112 and glutamate 116. Residues 133–135 (SPG) and glutamate 139 each bind substrate. Residue glutamate 162 is the Proton acceptor of the active site. Glutamate 164 contributes to the Mg(2+) binding site.

The protein belongs to the Nudix hydrolase family. NudF subfamily. In terms of assembly, homodimer. The cofactor is Mg(2+).

It carries out the reaction ADP-D-ribose + H2O = D-ribose 5-phosphate + AMP + 2 H(+). Its activity is regulated as follows. Inhibited by phosphorylated compounds such as AMP, ADP, ATP, 3-phosphoglyceric acid and PPi. Not inhibited by orthophosphate. Activity is high in cells grown in low glucose concentrations and decreases dramatically as glucose concentration increases. Functionally, acts on ADP-mannose and ADP-glucose as well as ADP-ribose. Prevents glycogen biosynthesis. The reaction catalyzed by this enzyme is a limiting step of the gluconeogenic process. The protein is ADP-ribose pyrophosphatase (nudF) of Escherichia coli O157:H7.